Reading from the N-terminus, the 3411-residue chain is Genome polyprotein (3411 aa).

Residues methionine 1–aspartate 104 lie on the Cytoplasmic side of the membrane. Residues proline 38–leucine 72 form a hydrophobic; homodimerization of capsid protein C region. A propeptide spans serine 102–glycine 121 (ER anchor for the capsid protein C, removed in mature form by serine protease NS3). A helical transmembrane segment spans residues valine 105 to valine 125. The Extracellular portion of the chain corresponds to arginine 126 to arginine 244. N-linked (GlcNAc...) asparagine; by host glycans are attached at residues asparagine 134 and asparagine 150. A helical membrane pass occupies residues tryptophan 245–serine 265. The Cytoplasmic segment spans residues asparagine 266 to arginine 270. A helical membrane pass occupies residues valine 271–serine 285. Residues alanine 286 to leucine 730 are Extracellular-facing. 8 disulfide bridges follow: cysteine 288-cysteine 315, cysteine 345-cysteine 401, cysteine 345-cysteine 406, cysteine 359-cysteine 390, cysteine 377-cysteine 401, cysteine 377-cysteine 406, cysteine 467-cysteine 568, and cysteine 585-cysteine 615. Residues aspartate 383–glycine 396 are fusion peptide. Residues phenylalanine 731–isoleucine 751 form a helical membrane-spanning segment. Residues asparagine 752–threonine 757 are Extracellular-facing. The chain crosses the membrane as a helical span at residues methionine 758 to alanine 778. Topologically, residues aspartate 779–glutamate 1132 are extracellular. Disulfide bonds link cysteine 782–cysteine 793, cysteine 833–cysteine 921, cysteine 957–cysteine 1002, cysteine 1058–cysteine 1107, cysteine 1069–cysteine 1091, and cysteine 1090–cysteine 1094. N-linked (GlcNAc...) asparagine; by host glycosylation is found at asparagine 908 and asparagine 986. Residues isoleucine 1133–lysine 1153 form a helical membrane-spanning segment. Residues arginine 1154–alanine 1201 are Cytoplasmic-facing. The chain crosses the membrane as a helical span at residues methionine 1202–leucine 1222. The Lumenal portion of the chain corresponds to arginine 1223 to proline 1287. A helical transmembrane segment spans residues valine 1288–valine 1308. At leucine 1309–serine 1355 the chain is on the cytoplasmic side. Residues isoleucine 1356–phenylalanine 1376 traverse the membrane as a helical segment. Topologically, residues glutamine 1377–glutamate 1378 are lumenal. A helical membrane pass occupies residues methionine 1379–alanine 1399. Over glycine 1400–leucine 1456 the chain is Cytoplasmic. An interacts with and activates NS3 protease region spans residues leucine 1407–valine 1446. Positions alanine 1457–phenylalanine 1477 form an intramembrane region, helical. Residues histidine 1478 to alanine 2157 are Cytoplasmic-facing. One can recognise a Peptidase S7 domain in the interval serine 1485 to leucine 1665. Residues histidine 1537, aspartate 1561, and serine 1622 each act as charge relay system; for serine protease NS3 activity in the active site. One can recognise a Helicase ATP-binding domain in the interval proline 1669–glutamine 1825. The tract at residues lysine 1673 to methionine 1676 is important for RNA-binding. Phenylalanine 1682–threonine 1689 lines the ATP pocket. The DEAH box motif lies at aspartate 1773–histidine 1776. One can recognise a Helicase C-terminal domain in the interval glutamate 1820–tyrosine 1997. Lysine 1877 is modified (N6-acetyllysine; by host). The chain crosses the membrane as a helical span at residues methionine 2158–phenylalanine 2178. Topologically, residues methionine 2179–arginine 2186 are lumenal. Residues methionine 2187–lysine 2207 constitute an intramembrane region (helical). Over proline 2208–threonine 2209 the chain is Lumenal. The chain crosses the membrane as a helical span at residues histidine 2210–glycine 2230. The Cytoplasmic portion of the chain corresponds to glutamine 2231 to alanine 2241. The chain crosses the membrane as a helical span at residues tyrosine 2242 to leucine 2262. Residues glutamate 2263–glycine 2293 lie on the Lumenal side of the membrane. The helical intramembrane region spans alanine 2294–isoleucine 2314. The Lumenal segment spans residues lysine 2315–isoleucine 2360. The helical transmembrane segment at threonine 2361–proline 2381 threads the bilayer. Over glycine 2382–alanine 2421 the chain is Cytoplasmic. Residues leucine 2422–methionine 2442 form a helical membrane-spanning segment. Over cysteine 2443–threonine 2445 the chain is Lumenal. The chain crosses the membrane as a helical span at residues proline 2446–glycine 2466. The Cytoplasmic segment spans residues asparagine 2467–isoleucine 3411. An mRNA cap 0-1 NS5-type MT domain is found at glycine 2507–serine 2771. Serine 2562 contacts S-adenosyl-L-methionine. Serine 2562 carries the post-translational modification Phosphoserine. Catalysis depends on lysine 2567, which acts as the For 2'-O-MTase activity. 6 residues coordinate S-adenosyl-L-methionine: glycine 2592, tryptophan 2593, threonine 2610, leucine 2611, aspartate 2637, and isoleucine 2638. The active-site For 2'-O-MTase activity is aspartate 2652. S-adenosyl-L-methionine is bound at residue isoleucine 2653. Active-site for 2'-O-MTase activity residues include lysine 2688 and glutamate 2724. Residue tyrosine 2726 coordinates S-adenosyl-L-methionine. Positions arginine 2878–arginine 2911 match the Nuclear localization signal motif. The Zn(2+) site is built by glutamate 2945, histidine 2949, cysteine 2954, and cysteine 2957. A RdRp catalytic domain is found at glycine 3035–alanine 3187. Histidine 3222, cysteine 3238, and cysteine 3357 together coordinate Zn(2+).

This sequence in the N-terminal section; belongs to the class I-like SAM-binding methyltransferase superfamily. mRNA cap 0-1 NS5-type methyltransferase family. In terms of assembly, homodimer. Interacts (via N-terminus) with host EXOC1 (via C-terminus); this interaction results in EXOC1 degradation through the proteasome degradation pathway. Forms heterodimers with envelope protein E in the endoplasmic reticulum and Golgi. As to quaternary structure, homodimer; in the endoplasmic reticulum and Golgi. Interacts with protein prM. Interacts with non-structural protein 1. In terms of assembly, homodimer; Homohexamer when secreted. Interacts with envelope protein E. Interacts (via N-terminus) with serine protease NS3. As to quaternary structure, forms a heterodimer with serine protease NS3. May form homooligomers. In terms of assembly, forms a heterodimer with NS2B. Interacts with non-structural protein 2A (via N-terminus). Interacts with NS4B. Interacts with unphosphorylated RNA-directed RNA polymerase NS5; this interaction stimulates RNA-directed RNA polymerase NS5 guanylyltransferase activity. NS3 interacts with host PDCD6IP; this interaction contributes to virion release. Interacts with serine protease NS3. As to quaternary structure, homodimer. Interacts with host STAT2; this interaction prevents the establishment of cellular antiviral state. Interacts with serine protease NS3. Interacts with host TRIM23; this interaction leads to NS5 ubiquitination. Post-translationally, specific enzymatic cleavages in vivo yield mature proteins. The nascent capsid protein C contains a C-terminal hydrophobic domain that act as a signal sequence for translocation of prM into the lumen of the ER. Mature capsid protein C is cleaved at a site upstream of this hydrophobic domain by NS3. prM is cleaved in post-Golgi vesicles by a host furin, releasing the mature small envelope protein M, and peptide pr. Non-structural protein 2A-alpha, a C-terminally truncated form of non-structural protein 2A, results from partial cleavage by NS3. Specific enzymatic cleavages in vivo yield mature proteins peptide 2K acts as a signal sequence and is removed from the N-terminus of NS4B by the host signal peptidase in the ER lumen. Signal cleavage at the 2K-4B site requires a prior NS3 protease-mediated cleavage at the 4A-2K site. Cleaved in post-Golgi vesicles by a host furin, releasing the mature small envelope protein M, and peptide pr. This cleavage is incomplete as up to 30% of viral particles still carry uncleaved prM. In terms of processing, N-glycosylated. Post-translationally, N-glycosylated. The excreted form is glycosylated and this is required for efficient secretion of the protein from infected cells. Polyubiquitinated; ubiquitination is probably mediated by host TRIM23 and is prerequisite for NS5-STAT2 interaction. NS5 is not ISGylated or sumoylated. In terms of processing, acetylated by host KAT5. Acetylation modulates NS3 RNA-binding and unwinding activities and plays an important positive role for viral replication. Post-translationally, phosphorylated on serines residues. This phosphorylation may trigger NS5 nuclear localization.

The protein resides in the virion. The protein localises to the host nucleus. Its subcellular location is the host cytoplasm. It is found in the host perinuclear region. It localises to the secreted. The protein resides in the virion membrane. The protein localises to the host endoplasmic reticulum membrane. It catalyses the reaction Selective hydrolysis of -Xaa-Xaa-|-Yaa- bonds in which each of the Xaa can be either Arg or Lys and Yaa can be either Ser or Ala.. It carries out the reaction RNA(n) + a ribonucleoside 5'-triphosphate = RNA(n+1) + diphosphate. The enzyme catalyses a ribonucleoside 5'-triphosphate + H2O = a ribonucleoside 5'-diphosphate + phosphate + H(+). The catalysed reaction is ATP + H2O = ADP + phosphate + H(+). It catalyses the reaction a 5'-end (5'-triphosphoguanosine)-ribonucleoside in mRNA + S-adenosyl-L-methionine = a 5'-end (N(7)-methyl 5'-triphosphoguanosine)-ribonucleoside in mRNA + S-adenosyl-L-homocysteine. It carries out the reaction a 5'-end (N(7)-methyl 5'-triphosphoguanosine)-ribonucleoside in mRNA + S-adenosyl-L-methionine = a 5'-end (N(7)-methyl 5'-triphosphoguanosine)-(2'-O-methyl-ribonucleoside) in mRNA + S-adenosyl-L-homocysteine + H(+). Plays a role in virus budding by binding to the cell membrane and gathering the viral RNA into a nucleocapsid that forms the core of a mature virus particle. During virus entry, may induce genome penetration into the host cytoplasm after hemifusion induced by the surface proteins. Can migrate to the cell nucleus where it modulates host functions. In terms of biological role, inhibits RNA silencing by interfering with host Dicer. Functionally, prevents premature fusion activity of envelope proteins in trans-Golgi by binding to envelope protein E at pH6.0. After virion release in extracellular space, gets dissociated from E dimers. Its function is as follows. Acts as a chaperone for envelope protein E during intracellular virion assembly by masking and inactivating envelope protein E fusion peptide. prM is the only viral peptide matured by host furin in the trans-Golgi network probably to avoid catastrophic activation of the viral fusion activity in acidic Golgi compartment prior to virion release. prM-E cleavage is inefficient, and many virions are only partially matured. These uncleaved prM would play a role in immune evasion. May play a role in virus budding. Exerts cytotoxic effects by activating a mitochondrial apoptotic pathway through M ectodomain. May display a viroporin activity. In terms of biological role, binds to host cell surface receptor and mediates fusion between viral and cellular membranes. Envelope protein is synthesized in the endoplasmic reticulum in the form of heterodimer with protein prM. They play a role in virion budding in the ER, and the newly formed immature particle is covered with 60 spikes composed of heterodimer between precursor prM and envelope protein E. The virion is transported to the Golgi apparatus where the low pH causes dissociation of PrM-E heterodimers and formation of E homodimers. prM-E cleavage is inefficient, and many virions are only partially matured. These uncleaved prM would play a role in immune evasion. Functionally, involved in immune evasion, pathogenesis and viral replication. Once cleaved off the polyprotein, is targeted to three destinations: the viral replication cycle, the plasma membrane and the extracellular compartment. Essential for viral replication. Required for formation of the replication complex and recruitment of other non-structural proteins to the ER-derived membrane structures. Excreted as a hexameric lipoparticle that plays a role against host immune response. Antagonizing the complement function. Binds to the host macrophages and dendritic cells. Inhibits signal transduction originating from Toll-like receptor 3 (TLR3). Its function is as follows. Component of the viral RNA replication complex that functions in virion assembly and antagonizes the host immune response. Required cofactor for the serine protease function of NS3. May have membrane-destabilizing activity and form viroporins. In terms of biological role, displays three enzymatic activities: serine protease, NTPase and RNA helicase. NS3 serine protease, in association with NS2B, performs its autocleavage and cleaves the polyprotein at dibasic sites in the cytoplasm: C-prM, NS2A-NS2B, NS2B-NS3, NS3-NS4A, NS4A-2K and NS4B-NS5. NS3 RNA helicase binds RNA and unwinds dsRNA in the 3' to 5' direction. Also plays a role in virus assembly. Functionally, regulates the ATPase activity of the NS3 helicase activity. NS4A allows NS3 helicase to conserve energy during unwinding. Its function is as follows. Functions as a signal peptide for NS4B and is required for the interferon antagonism activity of the latter. Induces the formation of ER-derived membrane vesicles where the viral replication takes place. Inhibits interferon (IFN)-induced host STAT1 phosphorylation and nuclear translocation, thereby preventing the establishment of cellular antiviral state by blocking the IFN-alpha/beta pathway. In terms of biological role, replicates the viral (+) and (-) RNA genome, and performs the capping of genomes in the cytoplasm. NS5 methylates viral RNA cap at guanine N-7 and ribose 2'-O positions. Besides its role in RNA genome replication, also prevents the establishment of cellular antiviral state by blocking the interferon-alpha/beta (IFN-alpha/beta) signaling pathway. IFN-I induces binding of NS5 to host IFN-activated transcription factor STAT2, preventing its transcriptional activity. Host TRIM23 is the E3 ligase that interacts with and polyubiquitinates NS5 to promote its binding to STAT2 and trigger IFN-I signaling inhibition. This is Genome polyprotein from Aedes aegypti (Yellowfever mosquito).